The following is a 591-amino-acid chain: Aspartate--tRNA(Asp/Asn) ligase (591 aa).

E175 provides a ligand contact to L-aspartate. Residues 199–202 (QQYK) are aspartate. Residues R221 and H450 each contribute to the L-aspartate site. Position 221 to 223 (221 to 223 (RDE)) interacts with ATP. E484 provides a ligand contact to ATP. R491 serves as a coordination point for L-aspartate. 536–539 (GVDR) provides a ligand contact to ATP.

It belongs to the class-II aminoacyl-tRNA synthetase family. Type 1 subfamily. Homodimer.

Its subcellular location is the cytoplasm. The catalysed reaction is tRNA(Asx) + L-aspartate + ATP = L-aspartyl-tRNA(Asx) + AMP + diphosphate. Its function is as follows. Aspartyl-tRNA synthetase with relaxed tRNA specificity since it is able to aspartylate not only its cognate tRNA(Asp) but also tRNA(Asn). Reaction proceeds in two steps: L-aspartate is first activated by ATP to form Asp-AMP and then transferred to the acceptor end of tRNA(Asp/Asn). The chain is Aspartate--tRNA(Asp/Asn) ligase from Rhodopseudomonas palustris (strain ATCC BAA-98 / CGA009).